A 592-amino-acid chain; its full sequence is Beta-fructofuranosidase, insoluble isoenzyme 2 (592 aa).

The first 40 residues, 1-40, serve as a signal peptide directing secretion; the sequence is MLIRCFHIKMALVTCFHSMLFLSAVVFIFSLDVNIRGVEA. The active site involves Asp-75. 5 N-linked (GlcNAc...) asparagine glycosylation sites follow: Asn-171, Asn-195, Asn-310, Asn-347, and Asn-568.

It belongs to the glycosyl hydrolase 32 family.

The protein resides in the secreted. It localises to the cell wall. The catalysed reaction is Hydrolysis of terminal non-reducing beta-D-fructofuranoside residues in beta-D-fructofuranosides.. Its function is as follows. May play an important role in phloem unloading and in stress response. This Daucus carota (Wild carrot) protein is Beta-fructofuranosidase, insoluble isoenzyme 2 (INV2).